Reading from the N-terminus, the 874-residue chain is DNA primase (874 aa).

A CHC2-type zinc finger spans residues 786 to 824 (CLRHTHRASSKNVRVFLVLYYTSQAITVTFMSQCFAGRC). Residues 848–857 (ASQDSTTSQL) are compositionally biased toward polar residues. A disordered region spans residues 848–874 (ASQDSTTSQLARRRDRQDGSFSETLPN).

This sequence belongs to the herpesviridae DNA primase family. In terms of assembly, associates with the helicase and the primase-associated factor to form the helicase-primase factor.

It is found in the host nucleus. Its function is as follows. Essential component of the helicase/primase complex. Unwinds the DNA at the replication forks and generates single-stranded DNA for both leading and lagging strand synthesis. The primase initiates primer synthesis and thereby produces large amount of short RNA primers on the lagging strand that the polymerase elongates using dNTPs. This is DNA primase from Epstein-Barr virus (strain B95-8) (HHV-4).